We begin with the raw amino-acid sequence, 319 residues long: Lipoyl synthase (319 aa).

The disordered stretch occupies residues 1–24 (MAVVIDTVGARPRHPEKQANPDTP). Over residues 13–24 (RHPEKQANPDTP) the composition is skewed to basic and acidic residues. [4Fe-4S] cluster-binding residues include Cys58, Cys63, Cys69, Cys84, Cys88, Cys91, and Ser298. One can recognise a Radical SAM core domain in the interval 70 to 287 (WDKSHATFMI…EEIARAKGFL (218 aa)).

The protein belongs to the radical SAM superfamily. Lipoyl synthase family. [4Fe-4S] cluster is required as a cofactor.

The protein localises to the cytoplasm. It catalyses the reaction [[Fe-S] cluster scaffold protein carrying a second [4Fe-4S](2+) cluster] + N(6)-octanoyl-L-lysyl-[protein] + 2 oxidized [2Fe-2S]-[ferredoxin] + 2 S-adenosyl-L-methionine + 4 H(+) = [[Fe-S] cluster scaffold protein] + N(6)-[(R)-dihydrolipoyl]-L-lysyl-[protein] + 4 Fe(3+) + 2 hydrogen sulfide + 2 5'-deoxyadenosine + 2 L-methionine + 2 reduced [2Fe-2S]-[ferredoxin]. Its pathway is protein modification; protein lipoylation via endogenous pathway; protein N(6)-(lipoyl)lysine from octanoyl-[acyl-carrier-protein]: step 2/2. Its function is as follows. Catalyzes the radical-mediated insertion of two sulfur atoms into the C-6 and C-8 positions of the octanoyl moiety bound to the lipoyl domains of lipoate-dependent enzymes, thereby converting the octanoylated domains into lipoylated derivatives. This is Lipoyl synthase from Phenylobacterium zucineum (strain HLK1).